We begin with the raw amino-acid sequence, 144 residues long: Small ribosomal subunit protein eS12z (144 aa).

An N-acetylserine modification is found at S2.

This sequence belongs to the eukaryotic ribosomal protein eS12 family.

This Arabidopsis thaliana (Mouse-ear cress) protein is Small ribosomal subunit protein eS12z (RPS12A).